A 796-amino-acid chain; its full sequence is MEAGGERFLRQRQVLLLFVFLGGSLAGSESRRYSVAEEKEKGFLIANLAKDLGLRVEELAARGAQVVSKGNKQHFQLSHQTGDLLLNEKLDREELCGPTEPCILHFQILLQNPLQFVTNELRIIDVNDHSPVFFENEMHLKILESTLPGTVIPLGNAEDLDVGRNSLQNYTITPNSHFHVLTRSRRDGRKYPELVLDKALDPEEQPELSLTLTALDGGSPPRSGTAQINIQVLDINDNAPEFAQPLYEVAVLENTPVNSVIVTVSASDLDTGSFGTISYAFFHASEEIRKTFQLNPITGDMQLVKYLNFEAINSYEVDIEAKDGGGLSGKSTVIVQVVDVNDNPPELTLSSVNSPIPENSGETVLAVFSVSDLDSGDNGRVMCSIENNLPFFLKPSVENFYTLVSEGALDRETRSEYNITITITDLGTPRLKTKYNITVLVSDVNDNAPAFTQISYTLFVRENNSPALHIGSVSATDRDSGTNAQVTYSLLPPQDPHLPLSSLVSINADNGHLFALRSLDYEALQAFEFRVGATDRGSPALSSEALVRVLVLDANDNSPFVLYPLQNGSAPCTELVPRAAEPGYLVTKVVAVDGDSGQNAWLSYQLLKATEPGLFGVWAHNGEVRTARLLSERDAAKHRLVVLVKDNGEPPRSATATLHVLLVDGFSQPYLPLPEAAPAQAQADLLTVYLVVALASVSSLFLFSVLLFVAVRLCRRSRAASVGRCSVPEGPFPGQMVDVSGTGTLSQSYQYEVCLTGGSGTNEFKFLKPIIPNFVAQGAERVSEANPSFRKSFEFS.

The first 26 residues, 1 to 26 (MEAGGERFLRQRQVLLLFVFLGGSLA), serve as a signal peptide directing secretion. Over 27–690 (GSESRRYSVA…AQADLLTVYL (664 aa)) the chain is Extracellular. Cadherin domains are found at residues 35–133 (VAEE…SPVF), 138–242 (MHLK…APEF), 247–347 (YEVA…PPEL), 352–451 (VNSP…APAF), and 456–561 (YTLF…SPFV). A glycan (N-linked (GlcNAc...) asparagine) is linked at N169. 2 N-linked (GlcNAc...) asparagine glycosylation sites follow: N418 and N436. N-linked (GlcNAc...) asparagine glycosylation occurs at N567. Positions 568–671 (GSAPCTELVP…LVDGFSQPYL (104 aa)) constitute a Cadherin 6 domain. A helical membrane pass occupies residues 691–711 (VVALASVSSLFLFSVLLFVAV). Residues 712–796 (RLCRRSRAAS…PSFRKSFEFS (85 aa)) are Cytoplasmic-facing.

It localises to the cell membrane. In terms of biological role, potential calcium-dependent cell-adhesion protein. May be involved in the establishment and maintenance of specific neuronal connections in the brain. The sequence is that of Protocadherin beta-3 (PCDHB3) from Homo sapiens (Human).